A 148-amino-acid chain; its full sequence is MQQKRREPVQAVQVFGRKKTATAVAYCKRGNGLLKVNGRPLEQIEPKVLQYKLQEPLLLLGKEKFAGVDIRVRVSGGGHVAQIYAIRQAISKALVAFYQKYVDEASKKEIKDILVQYDRTLLVGDPRRCEPKKFGGPGARARYQKSYR.

This sequence belongs to the universal ribosomal protein uS9 family.

In Drosophila melanogaster (Fruit fly), this protein is Small ribosomal subunit protein uS9 (RpS16).